The chain runs to 264 residues: Probable amino-acid-binding protein YxeM (264 aa).

An N-terminal signal peptide occupies residues 1 to 20 (MKMKKWTVLVVAALLAVLSA). A lipid anchor (N-palmitoyl cysteine) is attached at cysteine 21. A lipid anchor (S-diacylglycerol cysteine) is attached at cysteine 21.

It belongs to the bacterial solute-binding protein 3 family. In terms of assembly, the complex is composed of two ATP-binding proteins (YxeO), two transmembrane proteins (YxeN) and a solute-binding protein (YxeM).

The protein resides in the cell membrane. Its subcellular location is the membrane raft. Functionally, probably part of the ABC transporter complex YxeMNO that could be involved in amino-acid import. May transport S-methylcysteine. The protein is Probable amino-acid-binding protein YxeM (yxeM) of Bacillus subtilis (strain 168).